The following is a 442-amino-acid chain: Cyclic adenylate deaminase (442 aa).

This sequence belongs to the metallo-dependent hydrolases superfamily. Adenosine and AMP deaminases family. Zn(2+) is required as a cofactor.

The enzyme catalyses 3',5'-cyclic AMP + H2O + H(+) = 3',5'-cyclic IMP + NH4(+). Its function is as follows. Deaminates cAMP into cIMP, thereby repressing cAMP dependent metabolism or genes. The polypeptide is Cyclic adenylate deaminase (add) (Leptospira interrogans serogroup Icterohaemorrhagiae serovar copenhageni (strain Fiocruz L1-130)).